The following is a 587-amino-acid chain: MSSCVSSQPTSDRAAPQDELGSGGVSRESQKPCEALRGLSSLSIHLGMESFIVVTECEPGRGVDLSLARDQPLEADGQELPLDASEPESRSLLSGGKMSLQERSQGGPASSSSLDMNGRCICPSLSYSPASSPQSSPRMPRRPTVESHHVSITGLQDCVQLNQYTLKDEIGKGSYGVVKLAYNENDNTYYAMKVLSKKKLIRQAGFPRRPPPRGTRPAPGGCIQPRGPIEQVYQEIAILKKLDHPNVVKLVEVLDDPNEDHLYMVFELVNQGPVMEVPTLKPLSEDQARFYFQDLIKGIEYLHYQKIIHRDIKPSNLLVGEDGHIKIADFGVSNEFKGSDALLSNTVGTPAFMAPESLSETRKIFSGKALDVWAMGVTLYCFVFGQCPFMDERIMCLHSKIKSQALEFPDQPDIAEDLKDLITRMLDKNPESRIVVPEIKLHPWVTRHGAEPLPSEDENCTLVEVTEEEVENSVKHIPSLATVILVKTMIRKRSFGNPFEGSRREERSLSAPGNLLTKKPTREWEPLSEPKEARQRRQPPGPRASPCGGGGSALVKGGPCVESCGAPAPGSPPRTPPQQPEEAMEPE.

Polar residues predominate over residues 1–11 (MSSCVSSQPTS). 2 disordered regions span residues 1-32 (MSSC…SQKP) and 74-115 (EADG…SSLD). N-acetylserine is present on Ser2. Phosphoserine occurs at positions 99, 113, 128, 132, and 136. Polar residues predominate over residues 101–115 (QERSQGGPASSSSLD). The 282-residue stretch at 164–445 (YTLKDEIGKG…VPEIKLHPWV (282 aa)) folds into the Protein kinase domain. Residues 170-178 (IGKGSYGVV) and Lys193 each bind ATP. The interval 203–225 (QAGFPRRPPPRGTRPAPGGCIQP) is RP domain. The disordered stretch occupies residues 204-224 (AGFPRRPPPRGTRPAPGGCIQ). Asp311 functions as the Proton acceptor in the catalytic mechanism. The interval 471–476 (ENSVKH) is autoinhibitory domain. The calmodulin-binding stretch occupies residues 474-499 (VKHIPSLATVILVKTMIRKRSFGNPF). 2 positions are modified to phosphoserine: Ser494 and Ser510. A disordered region spans residues 496 to 587 (GNPFEGSRRE…QQPEEAMEPE (92 aa)). Residues 520–535 (PTREWEPLSEPKEARQ) show a composition bias toward basic and acidic residues. Positions 569-579 (PGSPPRTPPQQ) are enriched in pro residues. Ser571 bears the Phosphoserine mark.

It belongs to the protein kinase superfamily. Ser/Thr protein kinase family. In terms of assembly, interacts with calmodulin. Post-translationally, phosphorylated by PKA. Each isoform may show a different pattern of phosphorylation. Autophosphorylated. Mainly expressed in brain, but detected in all tissues tested (at protein level). In the brain, isoform 1 may be predominant. with high levels in the cerebellum and hippocampus, although isoform 3 is detectable. Isoform 3 is also expressed in lung.

The protein localises to the nucleus. It localises to the cytoplasm. It is found in the cell projection. The protein resides in the neuron projection. It carries out the reaction L-seryl-[protein] + ATP = O-phospho-L-seryl-[protein] + ADP + H(+). The enzyme catalyses L-threonyl-[protein] + ATP = O-phospho-L-threonyl-[protein] + ADP + H(+). Its activity is regulated as follows. Activated by Ca(2+)/calmodulin. Binding of calmodulin may relieve intrasteric autoinhibition. Autophosphorylation does not alter activity or regulation by Ca(2+)/calmodulin. In part, activity is independent on Ca(2+)/calmodulin. Its function is as follows. Calcium/calmodulin-dependent protein kinase belonging to a proposed calcium-triggered signaling cascade involved in a number of cellular processes. Phosphorylates CAMK1 and CAMK4. Phosphorylates CAMK1D. Seems to be involved in hippocampal activation of CREB1. Efficiently phosphorylates 5'-AMP-activated protein kinase (AMPK) trimer, including that consisting of PRKAA1, PRKAB1 and PRKAG1. This phosphorylation is stimulated in response to Ca(2+) signals. May play a role in neurite growth. Isoform 2 may promote neurite elongation, while isoform 1 may promoter neurite branching. This Rattus norvegicus (Rat) protein is Calcium/calmodulin-dependent protein kinase kinase 2 (Camkk2).